We begin with the raw amino-acid sequence, 156 residues long: Transcriptional repressor NrdR (156 aa).

A zinc finger lies at 3-34; sequence CPFCGSMDTRVLDSRPTLDGTAIRRRRECSSC. Residues 49-139 enclose the ATP-cone domain; that stretch reads VLVVKKDGRR…VYRDFREVDQ (91 aa).

This sequence belongs to the NrdR family. Zn(2+) serves as cofactor.

Functionally, negatively regulates transcription of bacterial ribonucleotide reductase nrd genes and operons by binding to NrdR-boxes. This chain is Transcriptional repressor NrdR, found in Thermotoga maritima (strain ATCC 43589 / DSM 3109 / JCM 10099 / NBRC 100826 / MSB8).